A 123-amino-acid polypeptide reads, in one-letter code: Amoebiasin-2 (123 aa).

Positions 1-16 are cleaved as a signal peptide; that stretch reads MKQFIFFALLCTSTYA. Positions 45 to 50 match the BC loop motif; that stretch reads NPSTGY. Positions 71-81 match the DE loop motif; it reads EPHPSGMVGFP. The FG loop signature appears at 105–114; that stretch reads PWEKGKEPLR.

This sequence belongs to the protease inhibitor I42 family. Monomer. May form homodimer. Interacts with cysteine protease CP2. Interacts with cysteine protease CP5.

The protein resides in the cytoplasmic vesicle. The protein localises to the lysosome. It is found in the phagosome. Functionally, cysteine protease inhibitor. Inhibits cysteine proteases CP1, CP2 and to a lesser extent CP5. The protein is Amoebiasin-2 of Entamoeba histolytica (strain ATCC 30459 / HM-1:IMSS / ABRM).